Consider the following 181-residue polypeptide: Transcription termination/antitermination protein NusG (181 aa).

In terms of domain architecture, KOW spans 130-161 (PGEMVRVNDGPFADFNGVVEEVDYEKSRLKVS).

Belongs to the NusG family. As to quaternary structure, monomer. Interacts with the transcription termination factor Rho and with RNA polymerase.

Functionally, participates in transcription elongation, termination and antitermination. In the absence of Rho, increases the rate of transcription elongation by the RNA polymerase (RNAP), probably by partially suppressing pausing. In the presence of Rho, modulates most Rho-dependent termination events by interacting with the RNAP to render the complex more susceptible to the termination activity of Rho. May be required to overcome a kinetic limitation of Rho to function at certain terminators. Also involved in ribosomal RNA transcriptional antitermination. This chain is Transcription termination/antitermination protein NusG, found in Salmonella typhi.